Consider the following 241-residue polypeptide: Carboxy-S-adenosyl-L-methionine synthase (241 aa).

Residues tyrosine 38, 63 to 65 (GCS), 88 to 89 (DN), 116 to 117 (DI), asparagine 131, and arginine 198 contribute to the S-adenosyl-L-methionine site.

Belongs to the class I-like SAM-binding methyltransferase superfamily. Cx-SAM synthase family. Homodimer.

It catalyses the reaction prephenate + S-adenosyl-L-methionine = carboxy-S-adenosyl-L-methionine + 3-phenylpyruvate + H2O. In terms of biological role, catalyzes the conversion of S-adenosyl-L-methionine (SAM) to carboxy-S-adenosyl-L-methionine (Cx-SAM). This chain is Carboxy-S-adenosyl-L-methionine synthase, found in Histophilus somni (strain 129Pt) (Haemophilus somnus).